Here is an 87-residue protein sequence, read N- to C-terminus: Small ribosomal subunit protein bS16 (87 aa).

This sequence belongs to the bacterial ribosomal protein bS16 family.

This Variovorax paradoxus (strain S110) protein is Small ribosomal subunit protein bS16.